A 138-amino-acid chain; its full sequence is Small ribosomal subunit protein bS6 (138 aa).

Residues 94–138 (VKQDGPLPTPKPTSKEDETEKEEVKPTEDKTESPAQEEKKEDSKE) form a disordered region. Positions 106–138 (TSKEDETEKEEVKPTEDKTESPAQEEKKEDSKE) are enriched in basic and acidic residues.

This sequence belongs to the bacterial ribosomal protein bS6 family.

Functionally, binds together with bS18 to 16S ribosomal RNA. In Prochlorococcus marinus (strain NATL1A), this protein is Small ribosomal subunit protein bS6.